The following is a 126-amino-acid chain: Probable prefoldin subunit 4 (126 aa).

This sequence belongs to the prefoldin subunit beta family. Heterohexamer of two PFD-alpha type and four PFD-beta type subunits.

Binds specifically to cytosolic chaperonin (c-CPN) and transfers target proteins to it. Binds to nascent polypeptide chain and promotes folding in an environment in which there are many competing pathways for nonnative proteins. This is Probable prefoldin subunit 4 (pfd-4) from Caenorhabditis elegans.